Reading from the N-terminus, the 394-residue chain is Protein TsgA homolog (394 aa).

12 consecutive transmembrane segments (helical) span residues 11–31 (WISFFSYALTGALVIVTGMVM), 51–71 (FLNAGILISIFLNAWLMEIVP), 78–98 (FGFVLMVAAVAGLMVSHSIAL), 101–121 (VSMFVLGLVSGITMSIGTFLI), 134–154 (LLFTDSFFSMAGMIFPMVAAV), 162–182 (WYWVYACIGLVYVAIFVLTFG), 206–226 (IGVLFLSVAALCYILGQLGFI), 250–270 (FWMSYMFGMWAFSFILRFFDL), 273–293 (ILTVLAGLATVLMYLFINGAP), 297–317 (AWFILTLGFFSSAIYTSIITL), 332–352 (FVLTCGTIGTMLTFVVTGPIV), and 361–381 (LQTANGLYAVVFVMCLILGFV).

The protein belongs to the major facilitator superfamily. TsgA family.

It localises to the cell inner membrane. The chain is Protein TsgA homolog from Enterobacter sp. (strain 638).